Consider the following 31-residue polypeptide: U2-theraphotoxin-Hhn1a (31 aa).

Intrachain disulfides connect Cys2–Cys14, Cys7–Cys19, and Cys13–Cys26.

In terms of tissue distribution, expressed by the venom gland.

Its subcellular location is the secreted. Its function is as follows. Agglutinates erythrocytes. This chain is U2-theraphotoxin-Hhn1a, found in Cyriopagopus hainanus (Chinese bird spider).